The chain runs to 187 residues: MISSNDFRTGTTIELDGAVWRVVEFLHVKPGKGSAFVRTKLKAVQSGSVVEKTFRAGEMLQQALLEKSTLQHTYMEGEDFVFMDMSTYEETRLTAKQIGDSRKYLKEGMEVNVVTWNEKPLEVELPNSVVLEIAQTDPGVKGDTATGGTKPAILETGAQVMVPLFLSIGEKIKVDTRNDTYLGRENG.

Belongs to the elongation factor P family.

It is found in the cytoplasm. Its pathway is protein biosynthesis; polypeptide chain elongation. Functionally, involved in peptide bond synthesis. Stimulates efficient translation and peptide-bond synthesis on native or reconstituted 70S ribosomes in vitro. Probably functions indirectly by altering the affinity of the ribosome for aminoacyl-tRNA, thus increasing their reactivity as acceptors for peptidyl transferase. The protein is Elongation factor P of Synechococcus sp. (strain CC9311).